Here is a 447-residue protein sequence, read N- to C-terminus: Tetratricopeptide repeat protein 23 (447 aa).

TPR repeat units lie at residues 45–78 (LHLCEEKAKSYSNSHEYKQAVHELVRCVALTRIC), 137–170 (IELFHTMGRALLSLQKFKEAAENLTKAERLSKEL), 186–219 (ARIRLSFAQVYQGQKKSKEALSHYQAALEYVEIS), and 356–389 (AETYRLLGGADLAQGNHSGARKKLKKCLQIQTLL).

As to quaternary structure, found Associated with the EvC complex composed of EFCAB7, IQCE, EVC2 and EVC.

Its subcellular location is the cell projection. It is found in the cilium. Functionally, participates positively in the ciliary Hedgehog (Hh) signaling. This chain is Tetratricopeptide repeat protein 23 (TTC23), found in Homo sapiens (Human).